The primary structure comprises 231 residues: Class A basic helix-loop-helix protein 9 (231 aa).

Residues 61 to 113 (ARRMAANVRERKRILDYNEAFNALRRALQHDLGGKRLSKIATLRRAIHRITAL) enclose the bHLH domain. The segment at 135 to 168 (QAAQGSSTGNSSFSVPRSAPSPIAPSLTRRDIAS) is disordered. A compositionally biased stretch (polar residues) spans 137-149 (AQGSSTGNSSFSV).

Heterodimer. Efficient DNA binding requires dimerization with another bHLH protein. Interacts with TCF3, TCF4, and TCF12.

The protein resides in the nucleus. In terms of biological role, transcription factor, which play a role in limb development. Is an essential player in the regulatory network governing transcription of genes implicated in limb morphogenesis. The protein is Class A basic helix-loop-helix protein 9 (Bhlha9) of Mus musculus (Mouse).